Reading from the N-terminus, the 872-residue chain is MATRFKHQFSISLALTFFFFFTKTFSFTENEELGNLLRFKASFDDPKGSLSGWFNTSSSHHCNWTGITCTRAPTLYVSSINLQSLNLSGEISDSICDLPYLTHLDLSLNFFNQPIPLQLSRCVTLETLNLSSNLIWGTIPDQISEFSSLKVIDFSSNHVEGMIPEDLGLLFNLQVLNLGSNLLTGIVPPAIGKLSELVVLDLSENSYLVSEIPSFLGKLDKLEQLLLHRSGFHGEIPTSFVGLTSLRTLDLSLNNLSGEIPRSLGPSLKNLVSLDVSQNKLSGSFPSGICSGKRLINLSLHSNFFEGSLPNSIGECLSLERLQVQNNGFSGEFPVVLWKLPRIKIIRADNNRFTGQVPESVSLASALEQVEIVNNSFSGEIPHGLGLVKSLYKFSASQNRFSGELPPNFCDSPVLSIVNISHNRLLGKIPELKNCKKLVSLSLAGNAFTGEIPPSLADLHVLTYLDLSDNSLTGLIPQGLQNLKLALFNVSFNGLSGEVPHSLVSGLPASFLQGNPELCGPGLPNSCSSDRSNFHKKGGKALVLSLICLALAIATFLAVLYRYSRKKVQFKSTWRSEFYYPFKLTEHELMKVVNESCPSGSEVYVLSLSSGELLAVKKLVNSKNISSKSLKAQVRTIAKIRHKNITRILGFCFKDEMIFLIYEFTQNGSLHDMLSRAGDQLPWSIRLKIALGVAQALAYISKDYVPHLLHRNLKSANIFLDKDFEPKLSDFALDHIVGETAFQSLVHANTNSCYTAPENHYSKKATEDMDVYSFGVVLLELVTGQSAEKAEEGSSGESLDIVKQVRRKINLTDGAAQVLDQKILSDSCQSDMRKTLDIALDCTAVAAEKRPSLVKVIKLLEGISSSVSPVSA.

The N-terminal stretch at 1 to 26 (MATRFKHQFSISLALTFFFFFTKTFS) is a signal peptide. At 27 to 540 (FTENEELGNL…RSNFHKKGGK (514 aa)) the chain is on the extracellular side. Residues N55, N63, and N86 are each glycosylated (N-linked (GlcNAc...) asparagine). 18 LRR repeats span residues 79–98 (SINL…ICDL), 99–122 (PYLT…LSRC), 123–146 (VTLE…ISEF), 147–169 (SSLK…DLGL), 171–193 (FNLQ…AIGK), 195–217 (SELV…SFLG), 219–243 (LDKL…FVGL), 244–267 (TSLR…LGPS), 269–292 (KNLV…ICSG), 294–316 (RLIN…IGEC), 317–340 (LSLE…LWKL), 341–365 (PRIK…SLAS), 367–389 (LEQV…GLVK), 391–412 (LYKF…FCDS), 413–435 (PVLS…LKNC), 436–459 (KKLV…LADL), 460–482 (HVLT…GLQN), and 484–506 (KLAL…LVSG). Residue N129 is glycosylated (N-linked (GlcNAc...) asparagine). A glycan (N-linked (GlcNAc...) asparagine) is linked at N255. N297 is a glycosylation site (N-linked (GlcNAc...) asparagine). Residue N374 is glycosylated (N-linked (GlcNAc...) asparagine). A glycan (N-linked (GlcNAc...) asparagine) is linked at N419. An N-linked (GlcNAc...) asparagine glycan is attached at N489. The chain crosses the membrane as a helical span at residues 541 to 561 (ALVLSLICLALAIATFLAVLY). Over 562-872 (RYSRKKVQFK…ISSSVSPVSA (311 aa)) the chain is Cytoplasmic. A Phosphothreonine modification is found at T585. Positions 589–863 (LMKVVNESCP…VKVIKLLEGI (275 aa)) constitute a Protein kinase domain. Residues 595–603 (ESCPSGSEV) and K617 contribute to the ATP site. Residues Y662, Y699, Y754, and Y761 each carry the phosphotyrosine modification.

It belongs to the protein kinase superfamily. Ser/Thr protein kinase family.

It is found in the membrane. In Arabidopsis thaliana (Mouse-ear cress), this protein is Probably inactive leucine-rich repeat receptor-like protein kinase At5g06940.